The primary structure comprises 756 residues: 5-methyltetrahydropteroyltriglutamate--homocysteine methyltransferase (756 aa).

5-methyltetrahydropteroyltri-L-glutamate is bound by residues 16 to 19 (RELK) and Lys-112. L-homocysteine is bound by residues 432 to 434 (IGS) and Glu-485. Residues 432-434 (IGS) and Glu-485 each bind L-methionine. Residues 516 to 517 (RC) and Trp-562 each bind 5-methyltetrahydropteroyltri-L-glutamate. Asp-600 contributes to the L-homocysteine binding site. Position 600 (Asp-600) interacts with L-methionine. Glu-606 serves as a coordination point for 5-methyltetrahydropteroyltri-L-glutamate. Zn(2+) is bound by residues His-642, Cys-644, and Glu-666. The active-site Proton donor is His-695. Cys-727 contacts Zn(2+).

The protein belongs to the vitamin-B12 independent methionine synthase family. Zn(2+) is required as a cofactor.

The enzyme catalyses 5-methyltetrahydropteroyltri-L-glutamate + L-homocysteine = tetrahydropteroyltri-L-glutamate + L-methionine. It functions in the pathway amino-acid biosynthesis; L-methionine biosynthesis via de novo pathway; L-methionine from L-homocysteine (MetE route): step 1/1. Catalyzes the transfer of a methyl group from 5-methyltetrahydrofolate to homocysteine resulting in methionine formation. The sequence is that of 5-methyltetrahydropteroyltriglutamate--homocysteine methyltransferase from Haemophilus influenzae (strain PittGG).